A 751-amino-acid polypeptide reads, in one-letter code: Valine--tRNA ligase (751 aa).

K520 lines the ATP pocket.

The protein belongs to the class-I aminoacyl-tRNA synthetase family. ValS type 2 subfamily.

The protein resides in the cytoplasm. The enzyme catalyses tRNA(Val) + L-valine + ATP = L-valyl-tRNA(Val) + AMP + diphosphate. In terms of biological role, catalyzes the attachment of valine to tRNA(Val). As ValRS can inadvertently accommodate and process structurally similar amino acids such as threonine, to avoid such errors, it has a 'posttransfer' editing activity that hydrolyzes mischarged Thr-tRNA(Val) in a tRNA-dependent manner. This is Valine--tRNA ligase (valS) from Nanoarchaeum equitans (strain Kin4-M).